We begin with the raw amino-acid sequence, 382 residues long: Succinate--CoA ligase [ADP-forming] subunit beta (382 aa).

Residues 9-240 enclose the ATP-grasp domain; the sequence is KELFAKYGVK…PRDITEFEAY (232 aa). Residues K45, 52-54, L94, and E99 contribute to the ATP site; that span reads GRG. Mg(2+)-binding residues include N193 and D207. Residues N260 and 317 to 319 contribute to the substrate site; that span reads GIT.

The protein belongs to the succinate/malate CoA ligase beta subunit family. As to quaternary structure, heterotetramer of two alpha and two beta subunits. Requires Mg(2+) as cofactor.

The catalysed reaction is succinate + ATP + CoA = succinyl-CoA + ADP + phosphate. It catalyses the reaction GTP + succinate + CoA = succinyl-CoA + GDP + phosphate. It functions in the pathway carbohydrate metabolism; tricarboxylic acid cycle; succinate from succinyl-CoA (ligase route): step 1/1. In terms of biological role, succinyl-CoA synthetase functions in the citric acid cycle (TCA), coupling the hydrolysis of succinyl-CoA to the synthesis of either ATP or GTP and thus represents the only step of substrate-level phosphorylation in the TCA. The beta subunit provides nucleotide specificity of the enzyme and binds the substrate succinate, while the binding sites for coenzyme A and phosphate are found in the alpha subunit. The sequence is that of Succinate--CoA ligase [ADP-forming] subunit beta from Pyrobaculum calidifontis (strain DSM 21063 / JCM 11548 / VA1).